A 430-amino-acid polypeptide reads, in one-letter code: MSSIVAIKGFNDVLPTQTAAWRRLEQHLASLMDAYGYQQIRLPIVEQTGLFKRAIGDATDIVEKEMYTFFDKGTPPESLTLRPEGTAGCVRAMLEHNLLRGATPRVWYVGPMFRYEKPQKGRYRQFHQFGVETFGVATPDIDAELILMTARLWKRMGVSEKVQLELNTLGEIDERAAYRTALVEFLTQHKEALDEDSQRRLGTNPLRILDSKVESTQKILENAPKLHDFLQEDSLAHFNQLQEYLTHAGVSFVINQKLVRGLDYYNKTVFEWTTTALGSQGTVCAGGRYDGLVGQLKGKADQSVPAVGFAMGMERLLLLLEQVEQAEVVRDCDVFLVAESAFQGHALVLAEQIRDQFEGLASTIRVKTGSQGSMKSQMKKADQSGAHYAVILGEREWTTQELTVKELATSEQSQVAISELVPFLVKKFEK.

This sequence belongs to the class-II aminoacyl-tRNA synthetase family. As to quaternary structure, homodimer.

The protein localises to the cytoplasm. The enzyme catalyses tRNA(His) + L-histidine + ATP = L-histidyl-tRNA(His) + AMP + diphosphate + H(+). This is Histidine--tRNA ligase from Acinetobacter baylyi (strain ATCC 33305 / BD413 / ADP1).